Here is a 776-residue protein sequence, read N- to C-terminus: 1,4-alpha-glucan branching enzyme GlgB (776 aa).

Asp-431 (nucleophile) is an active-site residue. Catalysis depends on Glu-484, which acts as the Proton donor.

It belongs to the glycosyl hydrolase 13 family. GlgB subfamily. As to quaternary structure, monomer.

The enzyme catalyses Transfers a segment of a (1-&gt;4)-alpha-D-glucan chain to a primary hydroxy group in a similar glucan chain.. Its pathway is glycan biosynthesis; glycogen biosynthesis. In terms of biological role, catalyzes the formation of the alpha-1,6-glucosidic linkages in glycogen by scission of a 1,4-alpha-linked oligosaccharide from growing alpha-1,4-glucan chains and the subsequent attachment of the oligosaccharide to the alpha-1,6 position. This is 1,4-alpha-glucan branching enzyme GlgB from Trichodesmium erythraeum (strain IMS101).